A 211-amino-acid polypeptide reads, in one-letter code: Large ribosomal subunit protein bL9 (211 aa).

The interval 180–211 (DDIGAAGMDDDDDDAPAPAQADPSSEESSEED) is disordered.

Belongs to the bacterial ribosomal protein bL9 family.

Binds to the 23S rRNA. The protein is Large ribosomal subunit protein bL9 of Jannaschia sp. (strain CCS1).